A 1054-amino-acid chain; its full sequence is Acid trehalase (1054 aa).

A signal peptide spans 1–21; that stretch reads MRFKSVFTLLPLLAQLPSGGA. 5 N-linked (GlcNAc...) asparagine glycosylation sites follow: N47, N135, N176, N283, and N307. Residue 448–449 participates in substrate binding; sequence WD. N-linked (GlcNAc...) asparagine glycans are attached at residues N493, N513, N570, and N578. Catalysis depends on E584, which acts as the Proton donor. Residues N618 and N644 are each glycosylated (N-linked (GlcNAc...) asparagine). Residue 650-651 coordinates substrate; it reads KQ. N-linked (GlcNAc...) asparagine glycosylation is found at N665, N734, N803, N826, N838, N903, N937, N966, and N992.

Belongs to the glycosyl hydrolase 65 family.

It carries out the reaction alpha,alpha-trehalose + H2O = alpha-D-glucose + beta-D-glucose. The protein is Acid trehalase (treA) of Emericella nidulans (strain FGSC A4 / ATCC 38163 / CBS 112.46 / NRRL 194 / M139) (Aspergillus nidulans).